The chain runs to 428 residues: Dual-specificity RNA methyltransferase RlmN (428 aa).

Residues 1-17 (MPLHRVEALGEPQDRTG) show a composition bias toward basic and acidic residues. The tract at residues 1–44 (MPLHRVEALGEPQDRTGKTFSGRTNGPISSPLTDTERRMSIPQN) is disordered. The segment covering 18–33 (KTFSGRTNGPISSPLT) has biased composition (polar residues). Catalysis depends on E136, which acts as the Proton acceptor. The Radical SAM core domain occupies 142 to 381 (EDDRGALCVS…APIRMPRGRD (240 aa)). C149 and C386 are disulfide-bonded. The [4Fe-4S] cluster site is built by C156, C160, and C163. S-adenosyl-L-methionine contacts are provided by residues 212 to 213 (GE), S244, 266 to 268 (SLH), and N343. The active-site S-methylcysteine intermediate is C386.

This sequence belongs to the radical SAM superfamily. RlmN family. It depends on [4Fe-4S] cluster as a cofactor.

The protein resides in the cytoplasm. The enzyme catalyses adenosine(2503) in 23S rRNA + 2 reduced [2Fe-2S]-[ferredoxin] + 2 S-adenosyl-L-methionine = 2-methyladenosine(2503) in 23S rRNA + 5'-deoxyadenosine + L-methionine + 2 oxidized [2Fe-2S]-[ferredoxin] + S-adenosyl-L-homocysteine. It carries out the reaction adenosine(37) in tRNA + 2 reduced [2Fe-2S]-[ferredoxin] + 2 S-adenosyl-L-methionine = 2-methyladenosine(37) in tRNA + 5'-deoxyadenosine + L-methionine + 2 oxidized [2Fe-2S]-[ferredoxin] + S-adenosyl-L-homocysteine. Its function is as follows. Specifically methylates position 2 of adenine 2503 in 23S rRNA and position 2 of adenine 37 in tRNAs. m2A2503 modification seems to play a crucial role in the proofreading step occurring at the peptidyl transferase center and thus would serve to optimize ribosomal fidelity. This Rhodospirillum rubrum (strain ATCC 11170 / ATH 1.1.1 / DSM 467 / LMG 4362 / NCIMB 8255 / S1) protein is Dual-specificity RNA methyltransferase RlmN.